Consider the following 200-residue polypeptide: Holliday junction resolvase RecU (200 aa).

Positions 1–27 (MALKYPSGKEYRGNKPNAARRPAADYA) are disordered. Thr-84, Asp-86, Glu-99, and Gln-118 together coordinate Mg(2+).

The protein belongs to the RecU family. In terms of assembly, homodimer. Mg(2+) is required as a cofactor.

Its subcellular location is the cytoplasm. It catalyses the reaction Endonucleolytic cleavage at a junction such as a reciprocal single-stranded crossover between two homologous DNA duplexes (Holliday junction).. Functionally, endonuclease that resolves Holliday junction intermediates in genetic recombination. Cleaves mobile four-strand junctions by introducing symmetrical nicks in paired strands. Promotes annealing of linear ssDNA with homologous dsDNA. Required for DNA repair, homologous recombination and chromosome segregation. The protein is Holliday junction resolvase RecU of Geobacillus kaustophilus (strain HTA426).